Consider the following 1105-residue polypeptide: ATP-dependent DNA helicase MPH1 (1105 aa).

Residues 94 to 261 (IVQRAFYDNL…EIIDNLSISK (168 aa)) form the Helicase ATP-binding domain. 107 to 114 (LPTGLGKT) provides a ligand contact to ATP. The DEAH box motif lies at 209-212 (DEAH). The Helicase C-terminal domain maps to 468-641 (SIERIGSNLR…LITLAQSNRI (174 aa)). 5 disordered regions span residues 493–534 (EEAY…AQIK), 684–708 (KGKK…EKRF), 758–824 (IQSK…PKLG), 850–880 (LVTG…ECAP), and 918–953 (VSDD…FDEG). The segment covering 499-511 (KGKKGRTKGKATK) has biased composition (basic residues). Residues 518 to 532 (TPERSTSRTSSEDAQ) show a composition bias toward basic and acidic residues. Residues 684 to 705 (KGKKVTKSKSKSKSNSKSKKIE) show a composition bias toward basic residues. Positions 764–787 (PVKENQSKRPNSEHICEEDSRQET) are enriched in basic and acidic residues. Low complexity predominate over residues 788–799 (ENNSNESNGSFE). The span at 927–943 (DSINNQQLHKNKNLGST) shows a compositional bias: polar residues. Residues 944 to 953 (SDDDDAFDEG) are compositionally biased toward acidic residues.

The protein belongs to the DEAD box helicase family. DEAH subfamily. FANCM sub-subfamily. Interacts with the MHF histone-fold complex to form the FANCM-MHF complex.

It is found in the nucleus. It carries out the reaction ATP + H2O = ADP + phosphate + H(+). ATP-dependent DNA helicase involved in DNA damage repair by homologous recombination and in genome maintenance. Capable of unwinding D-loops. Plays a role in limiting crossover recombinants during mitotic DNA double-strand break (DSB) repair. Component of a FANCM-MHF complex which promotes gene conversion at blocked replication forks, probably by reversal of the stalled fork. This Debaryomyces hansenii (strain ATCC 36239 / CBS 767 / BCRC 21394 / JCM 1990 / NBRC 0083 / IGC 2968) (Yeast) protein is ATP-dependent DNA helicase MPH1.